A 462-amino-acid polypeptide reads, in one-letter code: Zinc finger CCCH domain-containing protein 8 (462 aa).

6 consecutive C3H1-type zinc fingers follow at residues 105 to 133 (RPGE…HPQW), 156 to 184 (QEGE…HPKE), 209 to 237 (RPSE…HPKD), 288 to 316 (RPGE…HPDR), 367 to 395 (RPGA…HPID), and 422 to 450 (REDA…HPPP).

The polypeptide is Zinc finger CCCH domain-containing protein 8 (Oryza sativa subsp. japonica (Rice)).